A 432-amino-acid chain; its full sequence is Lipid-A-disaccharide synthase (432 aa).

Residues 1-11 are compositionally biased toward polar residues; it reads MTGIGNQTSGI. Positions 1-35 are disordered; that stretch reads MTGIGNQTSGIETGVHDRAPADGEPTALPISHSPL.

It belongs to the LpxB family.

It carries out the reaction a lipid X + a UDP-2-N,3-O-bis[(3R)-3-hydroxyacyl]-alpha-D-glucosamine = a lipid A disaccharide + UDP + H(+). Its pathway is bacterial outer membrane biogenesis; LPS lipid A biosynthesis. In terms of biological role, condensation of UDP-2,3-diacylglucosamine and 2,3-diacylglucosamine-1-phosphate to form lipid A disaccharide, a precursor of lipid A, a phosphorylated glycolipid that anchors the lipopolysaccharide to the outer membrane of the cell. In Xanthomonas oryzae pv. oryzae (strain MAFF 311018), this protein is Lipid-A-disaccharide synthase.